We begin with the raw amino-acid sequence, 191 residues long: MIHISDAAQAHFAKLLANQEEGTQIRVFVINPGTPNAECGVSYCPPDAVEASDTALKFDLLTAYVDELSAPYLEDAEIDFVTDQLGSQLTLKAPNAKMRKVADDAPLMERVEYMLQSQINPQLAGHGGRVSLMEITDEGYAILQFGGGCNGCSMVDVTLKEGIEKQLLNEFPELKGVRDLTEHQRGEHSYY.

C149 and C152 together coordinate [4Fe-4S] cluster.

Belongs to the NfuA family. Homodimer. The cofactor is [4Fe-4S] cluster.

Involved in iron-sulfur cluster biogenesis. Binds a 4Fe-4S cluster, can transfer this cluster to apoproteins, and thereby intervenes in the maturation of Fe/S proteins. Could also act as a scaffold/chaperone for damaged Fe/S proteins. In Citrobacter koseri (strain ATCC BAA-895 / CDC 4225-83 / SGSC4696), this protein is Fe/S biogenesis protein NfuA.